Here is a 66-residue protein sequence, read N- to C-terminus: MRHQYYQPQPMYYQPQPQPIYIQQGPPPPRNDCCCCCNCGDCCSAIANVLCCLCLIDLCCSCAGGM.

This is an uncharacterized protein from Saccharomyces cerevisiae (strain ATCC 204508 / S288c) (Baker's yeast).